The chain runs to 293 residues: SAGA-associated factor 29 (293 aa).

Residues 3-86 (LVSADSRIAE…LRKALDKIAE (84 aa)) adopt a coiled-coil conformation. The region spanning 152–293 (GDYVAKPGDK…VVACKEPKKK (142 aa)) is the SGF29 C-terminal domain. 2 histone H3K4me3 N-terminus binding regions span residues 194 to 196 (DID) and 240 to 243 (QTTC). Residues 264-266 (FED) are histone H3K4me3 binding. An N6-acetyllysine modification is found at Lys-288.

Belongs to the SGF29 family. In terms of assembly, interacts with dimethylated and trimethylated 'Lys-4' of histone H3 (H3K4me2 and H3K4me3), with a preference for the trimethylated form (H3K4me3). Component of some SAGA-type complexes. Component of the ADA2A-containing complex (ATAC), composed of KAT14, KAT2A, TADA2L, TADA3L, ZZ3, MBIP, WDR5, YEATS2, CCDC101 and DR1. Interacts with (methylated) CGAS. Interacts with TADA3L, GCN5L2, SUPT3H and MYC.

The protein resides in the nucleus. Its function is as follows. Chromatin reader component of some histone acetyltransferase (HAT) SAGA-type complexes like the TFTC-HAT, ATAC or STAGA complexes. SGF29 specifically recognizes and binds methylated 'Lys-4' of histone H3 (H3K4me), with a preference for trimethylated form (H3K4me3). In the SAGA-type complexes, SGF29 is required to recruit complexes to H3K4me. Involved in the response to endoplasmic reticulum (ER) stress by recruiting the SAGA complex to H3K4me, thereby promoting histone H3 acetylation and cell survival. Also binds non-histone proteins that are methylated on Lys residues: specifically recognizes and binds CGAS monomethylated on 'Lys-491'. The polypeptide is SAGA-associated factor 29 (Mus musculus (Mouse)).